The sequence spans 153 residues: Large ribosomal subunit protein uL15 (153 aa).

Positions methionine 1–glutamate 40 are enriched in basic residues. The interval methionine 1 to arginine 60 is disordered. A compositionally biased stretch (basic and acidic residues) spans glutamine 41–arginine 60.

Belongs to the universal ribosomal protein uL15 family. Part of the 50S ribosomal subunit.

Binds to the 23S rRNA. The polypeptide is Large ribosomal subunit protein uL15 (Halobacterium salinarum (strain ATCC 29341 / DSM 671 / R1)).